A 206-amino-acid polypeptide reads, in one-letter code: Holliday junction branch migration complex subunit RuvA (206 aa).

Positions 1–63 (MIASLRGTVI…EDAMKLYGFI (63 aa)) are domain I. Residues 64–142 (DNESREMFSV…AFAAGVVDEA (79 aa)) form a domain II region. The tract at residues 143 to 153 (GEQISLPNANI) is flexible linker. Residues 154–206 (ASEVVVEQVSQALVGLGFSEKQSDDAVSFVLAADPSLDTSGALRAALAKLSGK) form a domain III region.

Belongs to the RuvA family. In terms of assembly, homotetramer. Forms an RuvA(8)-RuvB(12)-Holliday junction (HJ) complex. HJ DNA is sandwiched between 2 RuvA tetramers; dsDNA enters through RuvA and exits via RuvB. An RuvB hexamer assembles on each DNA strand where it exits the tetramer. Each RuvB hexamer is contacted by two RuvA subunits (via domain III) on 2 adjacent RuvB subunits; this complex drives branch migration. In the full resolvosome a probable DNA-RuvA(4)-RuvB(12)-RuvC(2) complex forms which resolves the HJ.

It localises to the cytoplasm. In terms of biological role, the RuvA-RuvB-RuvC complex processes Holliday junction (HJ) DNA during genetic recombination and DNA repair, while the RuvA-RuvB complex plays an important role in the rescue of blocked DNA replication forks via replication fork reversal (RFR). RuvA specifically binds to HJ cruciform DNA, conferring on it an open structure. The RuvB hexamer acts as an ATP-dependent pump, pulling dsDNA into and through the RuvAB complex. HJ branch migration allows RuvC to scan DNA until it finds its consensus sequence, where it cleaves and resolves the cruciform DNA. This Corynebacterium glutamicum (strain R) protein is Holliday junction branch migration complex subunit RuvA.